A 252-amino-acid polypeptide reads, in one-letter code: Probable NADP-dependent dehydrogenase HI_1430 (252 aa).

7-31 (LVTGATAGFGLAICKKLIEAGYKVI) lines the NADP(+) pocket. Substrate is bound at residue S137. The Proton acceptor role is filled by Y150.

The protein belongs to the short-chain dehydrogenases/reductases (SDR) family.

In Haemophilus influenzae (strain ATCC 51907 / DSM 11121 / KW20 / Rd), this protein is Probable NADP-dependent dehydrogenase HI_1430.